Consider the following 62-residue polypeptide: Prokaryotic ubiquitin-like protein Pup (62 aa).

Residues methionine 1–aspartate 36 are disordered. The ARC ATPase binding stretch occupies residues aspartate 18–tyrosine 56. Glutamine 62 bears the Deamidated glutamine mark. Glutamine 62 is covalently cross-linked (Isoglutamyl lysine isopeptide (Gln-Lys) (interchain with K-? in acceptor proteins)).

This sequence belongs to the prokaryotic ubiquitin-like protein family. In terms of assembly, strongly interacts with the proteasome-associated ATPase ARC through a hydrophobic interface; the interacting region of Pup lies in its C-terminal half. There is one Pup binding site per ARC hexamer ring. In terms of processing, is modified by deamidation of its C-terminal glutamine to glutamate by the deamidase Dop, a prerequisite to the subsequent pupylation process.

It functions in the pathway protein degradation; proteasomal Pup-dependent pathway. Functionally, protein modifier that is covalently attached to lysine residues of substrate proteins, thereby targeting them for proteasomal degradation. The tagging system is termed pupylation. The chain is Prokaryotic ubiquitin-like protein Pup from Corynebacterium kroppenstedtii (strain DSM 44385 / JCM 11950 / CIP 105744 / CCUG 35717).